Here is a 235-residue protein sequence, read N- to C-terminus: Ribitol-5-phosphate cytidylyltransferase (235 aa).

Residues 7–10 (LAGG), 82–88 (GADRNTS), and serine 113 each bind CTP.

The protein belongs to the IspD/TarI cytidylyltransferase family. TarI subfamily.

The enzyme catalyses D-ribitol 5-phosphate + CTP + H(+) = CDP-L-ribitol + diphosphate. It functions in the pathway cell wall biogenesis; poly(ribitol phosphate) teichoic acid biosynthesis. Catalyzes the transfer of the cytidylyl group of CTP to D-ribitol 5-phosphate. The chain is Ribitol-5-phosphate cytidylyltransferase from Streptococcus pneumoniae (strain Hungary19A-6).